Reading from the N-terminus, the 443-residue chain is tRNA modification GTPase MnmE (443 aa).

Arg-23, Glu-82, and Lys-121 together coordinate (6S)-5-formyl-5,6,7,8-tetrahydrofolate. Positions 215 to 364 (GTSIVLAGHP…LKQFIQQWMQ (150 aa)) constitute a TrmE-type G domain. Asn-225 provides a ligand contact to K(+). GTP is bound by residues 225 to 230 (NAGKSS), 244 to 250 (TDIPGTT), and 269 to 272 (DSAG). Position 229 (Ser-229) interacts with Mg(2+). Positions 244, 246, and 249 each coordinate K(+). Position 250 (Thr-250) interacts with Mg(2+). Lys-443 provides a ligand contact to (6S)-5-formyl-5,6,7,8-tetrahydrofolate.

The protein belongs to the TRAFAC class TrmE-Era-EngA-EngB-Septin-like GTPase superfamily. TrmE GTPase family. Homodimer. Heterotetramer of two MnmE and two MnmG subunits. Requires K(+) as cofactor.

It is found in the cytoplasm. Its function is as follows. Exhibits a very high intrinsic GTPase hydrolysis rate. Involved in the addition of a carboxymethylaminomethyl (cmnm) group at the wobble position (U34) of certain tRNAs, forming tRNA-cmnm(5)s(2)U34. The chain is tRNA modification GTPase MnmE from Chlamydia abortus (strain DSM 27085 / S26/3) (Chlamydophila abortus).